A 206-amino-acid polypeptide reads, in one-letter code: Pyrrolidone-carboxylate peptidase (206 aa).

Catalysis depends on residues glutamate 76, cysteine 139, and histidine 163.

This sequence belongs to the peptidase C15 family. As to quaternary structure, homotetramer.

Its subcellular location is the cytoplasm. The catalysed reaction is Release of an N-terminal pyroglutamyl group from a polypeptide, the second amino acid generally not being Pro.. In terms of biological role, removes 5-oxoproline from various penultimate amino acid residues except L-proline. The chain is Pyrrolidone-carboxylate peptidase (pcp) from Pyrococcus horikoshii (strain ATCC 700860 / DSM 12428 / JCM 9974 / NBRC 100139 / OT-3).